The following is a 227-amino-acid chain: Phosphoribosylformylglycinamidine synthase subunit PurQ (227 aa).

In terms of domain architecture, Glutamine amidotransferase type-1 spans 3–225 (FAVIVFPGSN…LRNWRESHVV (223 aa)). Cysteine 86 functions as the Nucleophile in the catalytic mechanism. Active-site residues include histidine 194 and glutamate 196.

As to quaternary structure, part of the FGAM synthase complex composed of 1 PurL, 1 PurQ and 2 PurS subunits.

It is found in the cytoplasm. The catalysed reaction is N(2)-formyl-N(1)-(5-phospho-beta-D-ribosyl)glycinamide + L-glutamine + ATP + H2O = 2-formamido-N(1)-(5-O-phospho-beta-D-ribosyl)acetamidine + L-glutamate + ADP + phosphate + H(+). It carries out the reaction L-glutamine + H2O = L-glutamate + NH4(+). Its pathway is purine metabolism; IMP biosynthesis via de novo pathway; 5-amino-1-(5-phospho-D-ribosyl)imidazole from N(2)-formyl-N(1)-(5-phospho-D-ribosyl)glycinamide: step 1/2. Its function is as follows. Part of the phosphoribosylformylglycinamidine synthase complex involved in the purines biosynthetic pathway. Catalyzes the ATP-dependent conversion of formylglycinamide ribonucleotide (FGAR) and glutamine to yield formylglycinamidine ribonucleotide (FGAM) and glutamate. The FGAM synthase complex is composed of three subunits. PurQ produces an ammonia molecule by converting glutamine to glutamate. PurL transfers the ammonia molecule to FGAR to form FGAM in an ATP-dependent manner. PurS interacts with PurQ and PurL and is thought to assist in the transfer of the ammonia molecule from PurQ to PurL. In Halalkalibacterium halodurans (strain ATCC BAA-125 / DSM 18197 / FERM 7344 / JCM 9153 / C-125) (Bacillus halodurans), this protein is Phosphoribosylformylglycinamidine synthase subunit PurQ.